Here is a 238-residue protein sequence, read N- to C-terminus: Orotidine 5'-phosphate decarboxylase (238 aa).

Residues Asp-10, Lys-32, 59-68 (DLKLHDIPNT), Thr-122, Arg-184, Gln-193, Gly-213, and Arg-214 contribute to the substrate site. The active-site Proton donor is Lys-61.

It belongs to the OMP decarboxylase family. Type 1 subfamily. As to quaternary structure, homodimer.

It carries out the reaction orotidine 5'-phosphate + H(+) = UMP + CO2. It participates in pyrimidine metabolism; UMP biosynthesis via de novo pathway; UMP from orotate: step 2/2. Its function is as follows. Catalyzes the decarboxylation of orotidine 5'-monophosphate (OMP) to uridine 5'-monophosphate (UMP). In Bacillus cereus (strain ZK / E33L), this protein is Orotidine 5'-phosphate decarboxylase.